The sequence spans 229 residues: Interleukin-27 subunit beta (229 aa).

A signal peptide spans 1–20 (MTPQLLLALVLWASCPPCSG). Fibronectin type-III domains lie at 24–130 (PPAA…IKPD) and 131–227 (PPEG…TMSL). N55 and N105 each carry an N-linked (GlcNAc...) asparagine glycan.

It belongs to the type I cytokine receptor family. Type 3 subfamily. As to quaternary structure, heterodimer with IL27/IL27A; not disulfide-linked. This heterodimer is known as interleukin IL-27. Heterodimer with IL12A; not disulfide-linked. This heterodimer is known as interleukin IL-35. Interacts with SQSTM1.

It localises to the secreted. In terms of biological role, associates with IL27 to form the IL-27 interleukin, a heterodimeric cytokine which functions in innate immunity. IL-27 has pro- and anti-inflammatory properties, that can regulate T-helper cell development, suppress T-cell proliferation, stimulate cytotoxic T-cell activity, induce isotype switching in B-cells, and that has diverse effects on innate immune cells. Among its target cells are CD4 T-helper cells which can differentiate in type 1 effector cells (TH1), type 2 effector cells (TH2) and IL17 producing helper T-cells (TH17). It drives rapid clonal expansion of naive but not memory CD4 T-cells. It also strongly synergizes with IL-12 to trigger interferon-gamma/IFN-gamma production of naive CD4 T-cells, binds to the cytokine receptor WSX-1/TCCR. Another important role of IL-27 is its antitumor activity as well as its antiangiogenic activity with activation of production of antiangiogenic chemokines. This Homo sapiens (Human) protein is Interleukin-27 subunit beta (EBI3).